We begin with the raw amino-acid sequence, 100 residues long: Urease subunit gamma (100 aa).

It belongs to the urease gamma subunit family. In terms of assembly, heterotrimer of UreA (gamma), UreB (beta) and UreC (alpha) subunits. Three heterotrimers associate to form the active enzyme.

Its subcellular location is the cytoplasm. The catalysed reaction is urea + 2 H2O + H(+) = hydrogencarbonate + 2 NH4(+). Its pathway is nitrogen metabolism; urea degradation; CO(2) and NH(3) from urea (urease route): step 1/1. This is Urease subunit gamma from Parasynechococcus marenigrum (strain WH8102).